The following is a 160-amino-acid chain: Thioredoxin-like protein 4A homolog (160 aa).

A disordered region spans residues 132–160 (KFLKKKKKKKNKKKQKKKIKKIKKKIKNN). Positions 133–160 (FLKKKKKKKNKKKQKKKIKKIKKKIKNN) are enriched in basic residues.

This sequence belongs to the DIM1 family. Component of the precatalytic spliceosome (spliceosome B complex). Component of the U5 snRNP complex. Component of the U4/U6-U5 tri-snRNP complex.

Its subcellular location is the nucleus. Plays a role in pre-mRNA splicing as component of the U5 snRNP and U4/U6-U5 tri-snRNP complexes that are involved in spliceosome assembly, and as component of the precatalytic spliceosome (spliceosome B complex). The protein is Thioredoxin-like protein 4A homolog (txnl4a) of Dictyostelium discoideum (Social amoeba).